Consider the following 244-residue polypeptide: Inactive chemokine-binding protein (244 aa).

A disordered region spans residues methionine 1–proline 79. A compositionally biased stretch (polar residues) spans glutamine 37–isoleucine 53. Residues threonine 54–aspartate 77 are compositionally biased toward acidic residues.

Belongs to the orthopoxvirus OPG001 family.

It localises to the host cytoplasm. In terms of biological role, the protein is truncated in this vaccinal strain and presumably inactive, because the lack of signal peptide prevents the protein of being secreted. In the wild-type viruses inhibits host immune defense by binding to host chemokines. Binds host CC chemokines (beta chemokines) such as RANTES with high affinity, but not CXC or C chemokines (alpha and gamma chemokines). This chain is Inactive chemokine-binding protein (OPG001), found in Vaccinia virus (strain Western Reserve) (VACV).